The following is a 237-amino-acid chain: Phosphatidylserine decarboxylase proenzyme (237 aa).

Residue Ser-206 is the Schiff-base intermediate with substrate; via pyruvic acid of the active site. Position 206 is a pyruvic acid (Ser); by autocatalysis (Ser-206).

This sequence belongs to the phosphatidylserine decarboxylase family. PSD-A subfamily. As to quaternary structure, heterodimer of a large membrane-associated beta subunit and a small pyruvoyl-containing alpha subunit. Requires pyruvate as cofactor. Is synthesized initially as an inactive proenzyme. Formation of the active enzyme involves a self-maturation process in which the active site pyruvoyl group is generated from an internal serine residue via an autocatalytic post-translational modification. Two non-identical subunits are generated from the proenzyme in this reaction, and the pyruvate is formed at the N-terminus of the alpha chain, which is derived from the carboxyl end of the proenzyme. The post-translation cleavage follows an unusual pathway, termed non-hydrolytic serinolysis, in which the side chain hydroxyl group of the serine supplies its oxygen atom to form the C-terminus of the beta chain, while the remainder of the serine residue undergoes an oxidative deamination to produce ammonia and the pyruvoyl prosthetic group on the alpha chain.

The protein resides in the cell membrane. It carries out the reaction a 1,2-diacyl-sn-glycero-3-phospho-L-serine + H(+) = a 1,2-diacyl-sn-glycero-3-phosphoethanolamine + CO2. It functions in the pathway phospholipid metabolism; phosphatidylethanolamine biosynthesis; phosphatidylethanolamine from CDP-diacylglycerol: step 2/2. Its function is as follows. Catalyzes the formation of phosphatidylethanolamine (PtdEtn) from phosphatidylserine (PtdSer). The sequence is that of Phosphatidylserine decarboxylase proenzyme from Mycobacteroides abscessus (strain ATCC 19977 / DSM 44196 / CCUG 20993 / CIP 104536 / JCM 13569 / NCTC 13031 / TMC 1543 / L948) (Mycobacterium abscessus).